Consider the following 132-residue polypeptide: Large ribosomal subunit protein uL22c (132 aa).

The protein belongs to the universal ribosomal protein uL22 family. As to quaternary structure, part of the 50S ribosomal subunit.

Its subcellular location is the plastid. The protein resides in the chloroplast. Its function is as follows. This protein binds specifically to 23S rRNA. Functionally, the globular domain of the protein is located near the polypeptide exit tunnel on the outside of the subunit, while an extended beta-hairpin is found that lines the wall of the exit tunnel in the center of the 70S ribosome. The polypeptide is Large ribosomal subunit protein uL22c (rpl22) (Populus alba (White poplar)).